A 1578-amino-acid chain; its full sequence is Chitinase ChiA (1578 aa).

The first 19 residues, 1 to 19 (MKHYYRLLFLLLFPLLASA), serve as a signal peptide directing secretion. The region spanning 25 to 466 (KKVVGYYAQW…NQVDTSFGSV (442 aa)) is the GH18 1 domain. The tract at residues 26-446 (KVVGYYAQWS…GGMIWELSQD (421 aa)) is GH18N. Chitin-binding positions include 92-93 (DA) and 119-122 (GGWT). The Proton donor role is filled by E162. Residues Y163, 249–252 (FGYD), and W441 each bind chitin. Positions 485 to 536 (TDVTVELRNASNAVIQTVVSANGNFAFNNLTSGQNYSLTALKATYTFTPVTL) constitute a CNA-B domain. The tract at residues 1142-1462 (KIILGYAHSW…GLMTWSVNWD (321 aa)) is GH18C. A GH18 2 domain is found at 1142-1483 (KIILGYAHSW…KAYAAYFASQ (342 aa)). E1264 serves as the catalytic Proton donor. Residues 1473 to 1578 (SKAYAAYFAS…KSFKVMNFLN (106 aa)) form a CTD region.

The protein belongs to the glycosyl hydrolase 18 family. Chitinase class II subfamily.

The protein resides in the secreted. The enzyme catalyses Random endo-hydrolysis of N-acetyl-beta-D-glucosaminide (1-&gt;4)-beta-linkages in chitin and chitodextrins.. Its function is as follows. Major extracellular chitinase, which is essential for chitin utilization. This Flavobacterium johnsoniae (strain ATCC 17061 / DSM 2064 / JCM 8514 / BCRC 14874 / CCUG 350202 / NBRC 14942 / NCIMB 11054 / UW101) (Cytophaga johnsonae) protein is Chitinase ChiA (chiA).